Here is a 708-residue protein sequence, read N- to C-terminus: Ribosomal RNA large subunit methyltransferase K/L (708 aa).

The THUMP domain occupies 43–154; sequence QGYQITLWTR…RGKITIGINF (112 aa).

This sequence belongs to the methyltransferase superfamily. RlmKL family.

It is found in the cytoplasm. It catalyses the reaction guanosine(2445) in 23S rRNA + S-adenosyl-L-methionine = N(2)-methylguanosine(2445) in 23S rRNA + S-adenosyl-L-homocysteine + H(+). It carries out the reaction guanosine(2069) in 23S rRNA + S-adenosyl-L-methionine = N(2)-methylguanosine(2069) in 23S rRNA + S-adenosyl-L-homocysteine + H(+). Specifically methylates the guanine in position 2445 (m2G2445) and the guanine in position 2069 (m7G2069) of 23S rRNA. The polypeptide is Ribosomal RNA large subunit methyltransferase K/L (Shewanella amazonensis (strain ATCC BAA-1098 / SB2B)).